Consider the following 147-residue polypeptide: UPF0178 protein VIBHAR_03247 (147 aa).

It belongs to the UPF0178 family.

The sequence is that of UPF0178 protein VIBHAR_03247 from Vibrio campbellii (strain ATCC BAA-1116).